A 398-amino-acid polypeptide reads, in one-letter code: O-methyltransferase penC (398 aa).

D263 contacts S-adenosyl-L-methionine. H305 acts as the Proton acceptor in catalysis.

Belongs to the class I-like SAM-binding methyltransferase superfamily. Cation-independent O-methyltransferase family.

It participates in secondary metabolite biosynthesis. It functions in the pathway alkaloid biosynthesis. Its pathway is mycotoxin biosynthesis. Functionally, O-methyltransferase; part of the gene cluster that mediates the biosynthesis of penigequinolones, potent insecticidal alkaloids that contain a highly modified 10-carbon prenyl group. The first stage is catalyzed by the nonribosomal peptide synthetase penN that condenses anthranilic acid and O-methyl-L-tyrosine to produce 4'-methoxycyclopeptin. 4'-methoxycyclopeptin is then converted to 4'-methoxydehydrocyclopeptin by the ketoglutarate-dependent dioxygenase penM through dehydrogenation to form a double bond between C-alpha and C-beta of the O-methyltyrosine side chain. PenM also converts its first product methoxydehydrocyclopeptin to 4'-methoxycyclopenin. The following conversion of 4'methoxycyclopenin into 4'-methoxyviridicatin is catalyzed by the cyclopenase penL. 4'-methoxyviridicatin is the precursor of quinolone natural products, and is further converted to quinolinone B. The prenyltransferase penI then catalyzes the canonical Friedel-Crafts alkylation of quinolinone B with dimethylallyl cation to yield dimethylallyl quinolone, which is subjected to FAD-dependent dehydrogenation by the FAD-linked oxidoreductase penH to yield conjugated aryl diene. The delta(3') double bond then serves as the site of the second alkylation with DMAPP catalyzed by the prenyltransferase penG to yield a carbenium ion intermediate, which can be attacked by H(2)O to yield a styrenyl quinolone containing a C3'-hydroxyprenyl chain, or undergo cyclization to yield yaequinolones J1 and J2. The conversion of the styrenyl quinolone into the tetrahydrofuran-containing yaequinolone C is performed by the FAD-dependent monooxygenase penE and involves epoxidation of the terminal C7'-C8' olefin, followed by epoxide ring opening initiated by the C3' hydroxyl group. The predicted cysteine hydrolase penJ acts as an epoxide hydrolase that enhances the rate of the 5-exo-tet cyclization step, increasing the yield of yaequinolone C. PenF catalyzes the cationic rearrangement of the epoxide formed by penE (before ring opening to produce yaequinolone C) into yaequinolone D. Finally, the short-chain dehydrogenase/reductase (SDR)-like reductase penD, catalyzes both the dehydration of yaequinolone D and the reduction of the resulting oxonium to yield penigequinolone. The sequence is that of O-methyltransferase penC from Penicillium thymicola.